A 694-amino-acid chain; its full sequence is DNA-binding protein RFX2 (694 aa).

A DNA-binding region (RFX-type winged-helix) is located at residues 174-249; the sequence is HLQWLLDNYE…YHYYGIRLKP (76 aa). Disordered regions lie at residues 268-309 and 659-694; these read QPIH…SQHH and DDVS…MQEM. Polar residues predominate over residues 288 to 299; that stretch reads NTANSSQHTSPE. A compositionally biased stretch (low complexity) spans 300 to 309; it reads QSVAAQSQHH.

This sequence belongs to the RFX family. Homodimer. Heterodimer; heterodimerizes with other rfx proteins.

Its subcellular location is the nucleus. The protein localises to the cytoplasm. Functionally, transcription factor that acts as a key regulator of ciliogenesis. Specifically regulates expression of genes required for cilium assembly and function. Recognizes and binds the X-box, a regulatory motif with DNA sequence 5'-GTNRCC(0-3N)RGYAAC-3' present on promoters. Required for neural tube closure and neural ciliogenesis. The polypeptide is DNA-binding protein RFX2 (rfx2) (Xenopus tropicalis (Western clawed frog)).